A 208-amino-acid polypeptide reads, in one-letter code: Small ribosomal subunit protein uS5 (208 aa).

Basic and acidic residues predominate over residues 1–21 (MSDREQRDGGRSAENNNDRKG). Residues 1–38 (MSDREQRDGGRSAENNNDRKGRNNGRRNDRRNHQDNER) form a disordered region. Residues 41 to 104 (YIERVVTINR…EEARKNFFRV (64 aa)) enclose the S5 DRBM domain.

This sequence belongs to the universal ribosomal protein uS5 family. As to quaternary structure, part of the 30S ribosomal subunit. Contacts proteins S4 and S8.

Functionally, with S4 and S12 plays an important role in translational accuracy. Located at the back of the 30S subunit body where it stabilizes the conformation of the head with respect to the body. The chain is Small ribosomal subunit protein uS5 from Corynebacterium aurimucosum (strain ATCC 700975 / DSM 44827 / CIP 107346 / CN-1) (Corynebacterium nigricans).